The sequence spans 379 residues: ATP-sensitive inward rectifier potassium channel 10 (379 aa).

At 1-61 (MTSVAKVYYS…LKDLWTTFID (61 aa)) the chain is on the cytoplasmic side. A 1,2-dioctanoyl-sn-glycero-3-phospho-(1D-myo-inositol-4,5-bisphosphate)-binding site is contributed by arginine 36. A helical membrane pass occupies residues 62–88 (MQWRYKLLLFSATFAGTWFLFGVVWYL). Over 89–114 (VAVAHGDLLELGPPANHTPCVVQVHT) the chain is Extracellular. A disulfide bond links cysteine 108 and cysteine 140. An intramembrane region (discontinuously helical; Pore-forming) is located at residues 115-131 (LTGAFLFSLESQTTIGY). Positions 128 to 133 (TIGYGF) match the Selectivity filter motif. Residues 132–140 (GFRYISEEC) lie on the Extracellular side of the membrane. A helical membrane pass occupies residues 141–166 (PLAIVLLIAQLVLTTILEIFITGTFL). Residues 167–379 (AKIARPKKRA…SALSVRISNV (213 aa)) lie on the Cytoplasmic side of the membrane. Residues lysine 168, arginine 171, and lysine 173 each contribute to the 1,2-dioctanoyl-sn-glycero-3-phospho-(1D-myo-inositol-4,5-bisphosphate) site. 210-217 (GCQVTGKL) serves as a coordination point for ATP.

It belongs to the inward rectifier-type potassium channel (TC 1.A.2.1) family. KCNJ10 subfamily. In terms of assembly, homotetramer. In kidney cells, it forms heteromeric channels with Kir5.1/KCNJ16; this interaction is required for KCNJ16 localization to the basolateral membrane. Interacts with MAGI1, alone and possibly as a heteromer with KCNJ16; this interaction may facilitate KCNJ10/KCNJ16 potassium channel expression at the basolateral membrane in kidney cells. Interacts with PATJ. In terms of tissue distribution, predominantly expressed in the brain, including in glial cells of the cerebellum and forebrain. Expressed at lower levels in the kidney, and other peripheral tissues.

Its subcellular location is the membrane. The protein resides in the basolateral cell membrane. The catalysed reaction is K(+)(in) = K(+)(out). With respect to regulation, channel activity is strongly regulated by variations of cytosolic pH; channels are activated by alkaline and inhibited by acidic pH values. Activated by phosphatidylinositol 4,5 biphosphate (PtdIns(4,5)P2). Inhibited by Ba(2+) and Cs(+). May be responsible for potassium buffering action of glial cells in the brain. Inward rectifier potassium channels are characterized by a greater tendency to allow potassium to flow into the cell rather than out of it. Their voltage dependence is regulated by the concentration of extracellular potassium; as external potassium is raised, the voltage range of the channel opening shifts to more positive voltages. The inward rectification is mainly due to the blockage of outward current by internal magnesium. Can be blocked by extracellular barium and cesium. In the kidney, together with KCNJ16, mediates basolateral K(+) recycling in distal tubules; this process is critical for Na(+) reabsorption at the tubules. The sequence is that of ATP-sensitive inward rectifier potassium channel 10 from Rattus norvegicus (Rat).